A 243-amino-acid polypeptide reads, in one-letter code: MSIIVFPAIDLKGGQVVRLAEGDMDRATVYGDDPADQARRFAEAGAEWLHVVDLDGAFAGRAVNAEAVEAIIKAFPGKVELGGGIRDRAGIDRWLALGVERVIIGTAALQNPDLVREAAKELPGRIVVGVDARDGFVATHGWAEVSTVGITDLADRFADAGVASLLFTDVGRDGLLKGCNVEATVALARHASIPVIASGGVASIADIAALVPHAGDGIEGVITGRALYDGRLDLAEALRVARG.

The active-site Proton acceptor is the aspartate 10. Aspartate 131 functions as the Proton donor in the catalytic mechanism.

The protein belongs to the HisA/HisF family.

Its subcellular location is the cytoplasm. It catalyses the reaction 1-(5-phospho-beta-D-ribosyl)-5-[(5-phospho-beta-D-ribosylamino)methylideneamino]imidazole-4-carboxamide = 5-[(5-phospho-1-deoxy-D-ribulos-1-ylimino)methylamino]-1-(5-phospho-beta-D-ribosyl)imidazole-4-carboxamide. The protein operates within amino-acid biosynthesis; L-histidine biosynthesis; L-histidine from 5-phospho-alpha-D-ribose 1-diphosphate: step 4/9. This chain is 1-(5-phosphoribosyl)-5-[(5-phosphoribosylamino)methylideneamino] imidazole-4-carboxamide isomerase, found in Rhizorhabdus wittichii (strain DSM 6014 / CCUG 31198 / JCM 15750 / NBRC 105917 / EY 4224 / RW1) (Sphingomonas wittichii).